The following is a 280-amino-acid chain: MVINSELFRSSNSFQEEGFESVTNGLSFSITEENISDSVILTTFHDFTNWIRLSSLWPLLYGTSCCFIEFASLIGSRFDFDRYGLVPRSSPRQADLIITAGTVTMKMAPSLVRLYEQMPEPKYVIAMGACTITGGMFSTDSYSTVRGVDKLIPVDVYLPGCPPKPEAIIDAVIKLRKKVGQETAHEKKNYQQSQRCFTMSHRLKPVLPIHTGTYDQQTLRRTPGIEMDTSLEYPLERILQNSIETSSPFQDSEEIGLLKDWKQSNQKQEQNVKMMKEEEA.

[4Fe-4S] cluster is bound by residues cysteine 65, cysteine 66, cysteine 130, and cysteine 161. The tract at residues 257 to 280 is disordered; that stretch reads LLKDWKQSNQKQEQNVKMMKEEEA.

The protein belongs to the complex I 20 kDa subunit family. In terms of assembly, NDH is composed of at least 16 different subunits, 5 of which are encoded in the nucleus. It depends on [4Fe-4S] cluster as a cofactor.

It is found in the plastid. The protein localises to the chloroplast thylakoid membrane. The catalysed reaction is a plastoquinone + NADH + (n+1) H(+)(in) = a plastoquinol + NAD(+) + n H(+)(out). It catalyses the reaction a plastoquinone + NADPH + (n+1) H(+)(in) = a plastoquinol + NADP(+) + n H(+)(out). In terms of biological role, NDH shuttles electrons from NAD(P)H:plastoquinone, via FMN and iron-sulfur (Fe-S) centers, to quinones in the photosynthetic chain and possibly in a chloroplast respiratory chain. The immediate electron acceptor for the enzyme in this species is believed to be plastoquinone. Couples the redox reaction to proton translocation, and thus conserves the redox energy in a proton gradient. The sequence is that of NAD(P)H-quinone oxidoreductase subunit K, chloroplastic from Staurastrum punctulatum (Green alga).